The primary structure comprises 221 residues: MIRSNKPPENNCLLYNKGLMPYLAAHAWQRSLLRQRIDYPNLEDVLILLEHPPVYTLGQGSSLEFLKFDPNQSEFEIHRIERGGEVTYHCPGQLVGYPILNLHRHRQDLHWYLRQLEEVIIRVLAVYDLKGDRLPSLTGVWLEGRKVAAIGIKVSRWITMHGFALNVCPDMTGFSRIVPCGITDKPVGSLAQWIPGITCEEVRVHVVQAFAEVFGLELVDS.

One can recognise a BPL/LPL catalytic domain in the interval P40 to L218. Substrate is bound by residues R82–H89, A149–G151, and G162–A164. The active-site Acyl-thioester intermediate is the C180.

Belongs to the LipB family.

The protein localises to the cytoplasm. It catalyses the reaction octanoyl-[ACP] + L-lysyl-[protein] = N(6)-octanoyl-L-lysyl-[protein] + holo-[ACP] + H(+). It participates in protein modification; protein lipoylation via endogenous pathway; protein N(6)-(lipoyl)lysine from octanoyl-[acyl-carrier-protein]: step 1/2. Functionally, catalyzes the transfer of endogenously produced octanoic acid from octanoyl-acyl-carrier-protein onto the lipoyl domains of lipoate-dependent enzymes. Lipoyl-ACP can also act as a substrate although octanoyl-ACP is likely to be the physiological substrate. This chain is Octanoyltransferase, found in Nostoc sp. (strain PCC 7120 / SAG 25.82 / UTEX 2576).